The chain runs to 166 residues: Large ribosomal subunit protein uL10 (166 aa).

The protein belongs to the universal ribosomal protein uL10 family. Part of the ribosomal stalk of the 50S ribosomal subunit. The N-terminus interacts with L11 and the large rRNA to form the base of the stalk. The C-terminus forms an elongated spine to which L12 dimers bind in a sequential fashion forming a multimeric L10(L12)X complex.

Functionally, forms part of the ribosomal stalk, playing a central role in the interaction of the ribosome with GTP-bound translation factors. This chain is Large ribosomal subunit protein uL10, found in Pelagibacter ubique (strain HTCC1062).